Consider the following 519-residue polypeptide: NADH-quinone oxidoreductase subunit C/D (519 aa).

The interval Met1 to Gln138 is NADH dehydrogenase I subunit C. Positions Asp159–Arg519 are NADH dehydrogenase I subunit D.

This sequence in the N-terminal section; belongs to the complex I 30 kDa subunit family. The protein in the C-terminal section; belongs to the complex I 49 kDa subunit family. In terms of assembly, NDH-1 is composed of 13 different subunits. Subunits NuoB, CD, E, F, and G constitute the peripheral sector of the complex.

It is found in the cell inner membrane. The enzyme catalyses a quinone + NADH + 5 H(+)(in) = a quinol + NAD(+) + 4 H(+)(out). NDH-1 shuttles electrons from NADH, via FMN and iron-sulfur (Fe-S) centers, to quinones in the respiratory chain. The immediate electron acceptor for the enzyme in this species is believed to be a menaquinone. Couples the redox reaction to proton translocation (for every two electrons transferred, four hydrogen ions are translocated across the cytoplasmic membrane), and thus conserves the redox energy in a proton gradient. This is NADH-quinone oxidoreductase subunit C/D from Phocaeicola vulgatus (strain ATCC 8482 / DSM 1447 / JCM 5826 / CCUG 4940 / NBRC 14291 / NCTC 11154) (Bacteroides vulgatus).